The sequence spans 153 residues: MAKETQLQVEAIKNGTVIDHIPAQIGIKVLKLFDMHNSSQRVTIGLNLPSSALGHKDLLKIENVFINEEQASKLALYAPHATVNQIENYEVVKKLALELPEKVNNVFECPNSNCITHNEPVASSFQVFEKKEEIRLKCKYCEKVFAREIVTER.

Residues C109, C114, C138, and C141 each contribute to the Zn(2+) site.

This sequence belongs to the PyrI family. In terms of assembly, contains catalytic and regulatory chains. It depends on Zn(2+) as a cofactor.

Its function is as follows. Involved in allosteric regulation of aspartate carbamoyltransferase. The chain is Aspartate carbamoyltransferase regulatory chain from Vibrio campbellii (strain ATCC BAA-1116).